A 117-amino-acid chain; its full sequence is G antigen 13 (117 aa).

The tract at residues 1 to 117 (MSWRGRSTYY…PEEGEKQSQC (117 aa)) is disordered. Acidic residues-rich tracts occupy residues 32-45 (FSDE…EEGE) and 87-96 (ECEDGPDGQE). Positions 103–117 (EEVKTPEEGEKQSQC) are enriched in basic and acidic residues.

It belongs to the GAGE family.

In Homo sapiens (Human), this protein is G antigen 13.